Consider the following 59-residue polypeptide: Ferredoxin (59 aa).

4Fe-4S ferredoxin-type domains are found at residues 2–30 (GKIT…LEVN) and 31–59 (DHVE…LKVE). C12, C15, C18, C22, C41, C44, C47, and C51 together coordinate [4Fe-4S] cluster.

The cofactor is [4Fe-4S] cluster.

Its function is as follows. Ferredoxins are iron-sulfur proteins that transfer electrons in a wide variety of metabolic reactions. This chain is Ferredoxin, found in Entamoeba histolytica (strain ATCC 30459 / HM-1:IMSS / ABRM).